A 227-amino-acid chain; its full sequence is tRNA pseudouridine synthase B (227 aa).

Asp42 functions as the Nucleophile in the catalytic mechanism.

It belongs to the pseudouridine synthase TruB family. Type 1 subfamily.

It carries out the reaction uridine(55) in tRNA = pseudouridine(55) in tRNA. Functionally, responsible for synthesis of pseudouridine from uracil-55 in the psi GC loop of transfer RNAs. This is tRNA pseudouridine synthase B from Ureaplasma parvum serovar 3 (strain ATCC 27815 / 27 / NCTC 11736).